Consider the following 25-residue polypeptide: Gastrin-releasing peptide (25 aa).

Methionine 25 bears the Methionine amide mark.

The protein belongs to the bombesin/neuromedin-B/ranatensin family.

The protein localises to the secreted. The protein resides in the cytoplasmic vesicle. It localises to the secretory vesicle lumen. In terms of biological role, stimulates the release of gastrin and other gastrointestinal hormones. In Scyliorhinus canicula (Small-spotted catshark), this protein is Gastrin-releasing peptide (grp).